The sequence spans 113 residues: Nucleoid-associated protein SYNW0027 (113 aa).

It belongs to the YbaB/EbfC family. In terms of assembly, homodimer.

The protein resides in the cytoplasm. Its subcellular location is the nucleoid. Its function is as follows. Binds to DNA and alters its conformation. May be involved in regulation of gene expression, nucleoid organization and DNA protection. The protein is Nucleoid-associated protein SYNW0027 of Parasynechococcus marenigrum (strain WH8102).